Consider the following 236-residue polypeptide: Repetitive proline-rich cell wall protein (236 aa).

The signal sequence occupies residues 1-22 (MASSNFLVLLLFALFVIPQGLA). 41 consecutive repeat copies span residues 27-31 (PPVYQ), 32-36 (PPVYK), 37-41 (PPVEK), 42-46 (PPVYK), 47-51 (PPVEK), 52-56 (PPVYK), 57-61 (PPVYK), 62-66 (PPVEK), 67-71 (PPVYK), 72-76 (PPVVK), 77-81 (PPVYK), 82-86 (PPVYK), 87-91 (PPVYK), 92-96 (PPVEK), 97-101 (PPVYK), 102-106 (PPVYK), 107-111 (PPVYK), 112-116 (PPVVK), 117-121 (PPVYK), 122-126 (PPVYK), 127-131 (PPVEK), 132-136 (PPVYK), 137-141 (PPVYK), 142-146 (PPVEK), 147-151 (PPVYK), 152-156 (PPVEK), 157-161 (PPVYK), 162-166 (PPVYK), 167-171 (PPVYK), 172-176 (PPVVK), 177-181 (PPVYK), 182-186 (PPVYK), 187-191 (PPVYK), 192-196 (PPVEK), 197-201 (PPVYK), 202-206 (PPVYK), 207-211 (PPVEK), 212-216 (PPVYK), 217-221 (PPVYK), 222-226 (PPVEK), and 227-231 (PPVYG). The tract at residues 27-236 (PPVYQPPVYK…PPVYGPPHHP (210 aa)) is 42 X 5 AA approximate tandem repeats of P-P-V-[EYV]-[KQG]. The tract at residues 143–177 (PVEKPPVYKPPVEKPPVYKPPVYKPPVYKPPVVKP) is disordered. The interval 204-236 (VYKPPVEKPPVYKPPVYKPPVEKPPVYGPPHHP) is disordered. The 42; approximate repeat unit spans residues 232 to 236 (PPHHP).

It belongs to the plant proline-rich protein superfamily. ENOD12 family.

Its subcellular location is the secreted. The protein localises to the cell wall. This is a developmentally regulated putative cell wall protein. In Medicago sativa (Alfalfa), this protein is Repetitive proline-rich cell wall protein (PRP).